Reading from the N-terminus, the 615-residue chain is UvrABC system protein C (615 aa).

Positions T14 to I91 constitute a GIY-YIG domain. The UVR domain maps to N196–L231.

Belongs to the UvrC family. As to quaternary structure, interacts with UvrB in an incision complex.

The protein localises to the cytoplasm. In terms of biological role, the UvrABC repair system catalyzes the recognition and processing of DNA lesions. UvrC both incises the 5' and 3' sides of the lesion. The N-terminal half is responsible for the 3' incision and the C-terminal half is responsible for the 5' incision. This chain is UvrABC system protein C, found in Streptococcus pneumoniae serotype 19F (strain G54).